Reading from the N-terminus, the 466-residue chain is Ribulose bisphosphate carboxylase large chain (466 aa).

K4 is modified (N6,N6,N6-trimethyllysine). Residues N113 and T163 each contribute to the substrate site. K165 (proton acceptor) is an active-site residue. A substrate-binding site is contributed by K167. Residues K191, D193, and E194 each contribute to the Mg(2+) site. K191 is modified (N6-carboxylysine). H284 acts as the Proton acceptor in catalysis. Substrate-binding residues include R285, H317, and S369.

It belongs to the RuBisCO large chain family. Type I subfamily. In terms of assembly, heterohexadecamer of 8 large chains and 8 small chains; disulfide-linked. The disulfide link is formed within the large subunit homodimers. Mg(2+) serves as cofactor. Post-translationally, the disulfide bond which can form in the large chain dimeric partners within the hexadecamer appears to be associated with oxidative stress and protein turnover.

It localises to the plastid. Its subcellular location is the chloroplast. It carries out the reaction 2 (2R)-3-phosphoglycerate + 2 H(+) = D-ribulose 1,5-bisphosphate + CO2 + H2O. The catalysed reaction is D-ribulose 1,5-bisphosphate + O2 = 2-phosphoglycolate + (2R)-3-phosphoglycerate + 2 H(+). RuBisCO catalyzes two reactions: the carboxylation of D-ribulose 1,5-bisphosphate, the primary event in carbon dioxide fixation, as well as the oxidative fragmentation of the pentose substrate in the photorespiration process. Both reactions occur simultaneously and in competition at the same active site. The chain is Ribulose bisphosphate carboxylase large chain from Barleria prionitis (Porcupine flower).